The sequence spans 229 residues: Large ribosomal subunit protein bL25 (229 aa).

Disordered stretches follow at residues 1 to 21 (MDII…ASSR) and 182 to 229 (NAPE…KDKK). Residues 195-222 (PAAGAPAAGAAAAPAAGAAAPAKGAAPA) show a composition bias toward low complexity.

The protein belongs to the bacterial ribosomal protein bL25 family. CTC subfamily. Part of the 50S ribosomal subunit; part of the 5S rRNA/L5/L18/L25 subcomplex. Contacts the 5S rRNA. Binds to the 5S rRNA independently of L5 and L18.

In terms of biological role, this is one of the proteins that binds to the 5S RNA in the ribosome where it forms part of the central protuberance. The protein is Large ribosomal subunit protein bL25 of Sorangium cellulosum (strain So ce56) (Polyangium cellulosum (strain So ce56)).